A 283-amino-acid polypeptide reads, in one-letter code: NAD kinase (283 aa).

Aspartate 68 (proton acceptor) is an active-site residue. NAD(+) contacts are provided by residues 68–69, arginine 73, 142–143, arginine 153, arginine 170, aspartate 172, and 183–188; these read DG, ND, and TAYSLS.

It belongs to the NAD kinase family. Requires a divalent metal cation as cofactor.

Its subcellular location is the cytoplasm. It catalyses the reaction NAD(+) + ATP = ADP + NADP(+) + H(+). Involved in the regulation of the intracellular balance of NAD and NADP, and is a key enzyme in the biosynthesis of NADP. Catalyzes specifically the phosphorylation on 2'-hydroxyl of the adenosine moiety of NAD to yield NADP. In Symbiobacterium thermophilum (strain DSM 24528 / JCM 14929 / IAM 14863 / T), this protein is NAD kinase.